The following is a 130-amino-acid chain: MSATQNYGTGRRKTATARVFLRPGTGKISINNRSLEQFFGRETARMVVRQPLELTETVEKFDIYVTVIGGGVSGQAGAIRHGITRALIEYDETFRSSLRHAGYVTRDAREVERKKVGLRKARKRPQYSKR.

Belongs to the universal ribosomal protein uS9 family.

This chain is Small ribosomal subunit protein uS9, found in Azotobacter vinelandii (strain DJ / ATCC BAA-1303).